Consider the following 213-residue polypeptide: ATP phosphoribosyltransferase (213 aa).

The protein belongs to the ATP phosphoribosyltransferase family. Short subfamily. As to quaternary structure, heteromultimer composed of HisG and HisZ subunits.

It localises to the cytoplasm. The enzyme catalyses 1-(5-phospho-beta-D-ribosyl)-ATP + diphosphate = 5-phospho-alpha-D-ribose 1-diphosphate + ATP. Its pathway is amino-acid biosynthesis; L-histidine biosynthesis; L-histidine from 5-phospho-alpha-D-ribose 1-diphosphate: step 1/9. Catalyzes the condensation of ATP and 5-phosphoribose 1-diphosphate to form N'-(5'-phosphoribosyl)-ATP (PR-ATP). Has a crucial role in the pathway because the rate of histidine biosynthesis seems to be controlled primarily by regulation of HisG enzymatic activity. This chain is ATP phosphoribosyltransferase, found in Teredinibacter turnerae (strain ATCC 39867 / T7901).